The sequence spans 928 residues: Echinoderm microtubule-associated protein-like 4 (928 aa).

Residues 1–189 (MDGFAGSLDD…IPSDVENYDD (189 aa)) form a microtubule-binding region. A coiled-coil region spans residues 14-63 (AASTSDVQDRLSALELRVQQQEDEITVLKAALADVLRRLAISEDQVATVR). The tract at residues 107–131 (SAAKSVKRSSTIEKSHNSWDASEES) is disordered. Basic and acidic residues predominate over residues 116–131 (STIEKSHNSWDASEES). 13 WD repeats span residues 199–237 (LKLEWVFGYRGRDCRANVYLLPTGEIVYFIASVVVLFNY), 241–288 (TQRH…VWDS), 296–336 (VIGL…VWDW), 343–378 (AEIKTTNEVVLTVEFHPTDACTIVTCGKSHIFFWTW), 385–424 (RKQGIFGKYEKPKFVQCLAFLANGDVLAGDSGGVMLIWSK), 442–480 (QISRQIKAHDGSVFTLCQMRNGMLLTGGGKDRKVIMWDH), 485–521 (EREIEVPDQYGTIRAVAEGKGDQFLIGTSRNFILRGT), 524–563 (DGFQVEVQGHTDELWGLATHPFKDLLLTCAQDKQVCLWNS), 567–604 (SLEWTRVLDEPGHCADFHPTGTVVAIGTHSGRWFVLDA), 610–646 (VSIHTDGNEQLSVMRYSVDGALLAVGSHDNFIYLYNV), 653–692 (YSRYGKCTGHSSYITHLDWSPDNQYIMSNSGDYEILYWDI), 702–760 (RSDC…LFQY), and 767–806 (APSHKYSAHSSHVTNVSFTHKDSHLISTGGKDMSIMQWRL). The interval 821-928 (SSSAVNSPVV…ENQDDSSPLS (108 aa)) is disordered. The segment covering 836–845 (QPNTPTNLPQ) has biased composition (polar residues). Acidic residues predominate over residues 867 to 876 (DALEQPEELN). Positions 877-898 (EVQSEKCSSQPEGANGQEPSNE) are enriched in polar residues.

The protein belongs to the WD repeat EMAP family. As to quaternary structure, homotrimer; self-association is mediated by the N-terminal coiled coil.

Its subcellular location is the cytoplasm. It is found in the cytoskeleton. The protein resides in the spindle. It localises to the microtubule organizing center. The protein localises to the midbody. Functionally, essential for the formation and stability of microtubules (MTs). Required for the organization of the mitotic spindle and for the proper attachment of kinetochores to MTs. Promotes the recruitment of NUDC to the mitotic spindle for mitotic progression. The chain is Echinoderm microtubule-associated protein-like 4 (eml4) from Xenopus tropicalis (Western clawed frog).